The sequence spans 152 residues: Large ribosomal subunit protein bL9 (152 aa).

Belongs to the bacterial ribosomal protein bL9 family.

Functionally, binds to the 23S rRNA. This chain is Large ribosomal subunit protein bL9, found in Nostoc punctiforme (strain ATCC 29133 / PCC 73102).